The following is a 198-amino-acid chain: Beta-crystallin A1-2 (198 aa).

The N-terminal arm stretch occupies residues 1 to 13 (MAQINPLPVPLGP). 2 Beta/gamma crystallin 'Greek key' domains span residues 14 to 53 (WKIT…KVEC) and 54 to 100 (GAWI…RPIC). Residues 101–106 (SANHIE) are connecting peptide. 2 consecutive Beta/gamma crystallin 'Greek key' domains span residues 107–148 (SKLV…KVQC) and 149–197 (GAWV…RRIQ).

This sequence belongs to the beta/gamma-crystallin family. As to quaternary structure, homo/heterodimer, or complexes of higher-order. The structure of beta-crystallin oligomers seems to be stabilized through interactions between the N-terminal arms. The N-terminus is blocked.

Its function is as follows. Crystallins are the dominant structural components of the vertebrate eye lens. The polypeptide is Beta-crystallin A1-2 (Aquarana catesbeiana (American bullfrog)).